Reading from the N-terminus, the 211-residue chain is Putative ATP-dependent Clp protease proteolytic subunit-like (211 aa).

A disordered region spans residues 1 to 24 (MTRPSARHVLPEFTERTSAGTRTS). Histidine 129 is an active-site residue.

This sequence belongs to the peptidase S14 family.

Functionally, has lost one of the conserved residue (Ser) proposed to be part of the active site. Therefore it could be inactive. The sequence is that of Putative ATP-dependent Clp protease proteolytic subunit-like from Streptomyces coelicolor (strain ATCC BAA-471 / A3(2) / M145).